The chain runs to 590 residues: Hyaluronan synthase 1 (590 aa).

Over 1 to 31 (MKDKAAATMEIPEDPGIPKNLERKRPIVWRM) the chain is Cytoplasmic. The chain crosses the membrane as a helical span at residues 32-52 (IYYSFAVLLLAAFTAAYVTEF). Residues 53-60 (QILTHEDV) lie on the Extracellular side of the membrane. The helical transmembrane segment at 61–81 (LFSLGLYGLVMFLHLMMQSLF) threads the bilayer. The Cytoplasmic segment spans residues 82 to 401 (AYLEIRRINK…YNAQWWYKHH (320 aa)). Residues 402 to 422 (IWMTYESVVHFIFPFFITATV) traverse the membrane as a helical segment. Over 423–425 (IRL) the chain is Extracellular. A helical membrane pass occupies residues 426 to 446 (LYASTIWNVVWLLLCIQIMSV). Residues 447 to 456 (LKSLYACWLR) are Cytoplasmic-facing. The chain crosses the membrane as a helical span at residues 457–477 (GNPIMLLMSLYSMLYMTGLLP). Residues 478–505 (SKYFAMLTINKSGWGTSGRKKIVGNYMP) are Extracellular-facing. The helical transmembrane segment at 506-526 (VLPLSIWMAVLCGGVGYSIYM) threads the bilayer. The Cytoplasmic segment spans residues 527–543 (DCHQDWSTPEKQKELYH). A helical transmembrane segment spans residues 544-564 (LLYGCISYTLYWVLMALMYWV). Over 565 to 588 (WVKRCCRKRSQTVTLVHDIPERLV) the chain is Extracellular.

This sequence belongs to the NodC/HAS family. It depends on Mg(2+) as a cofactor.

It localises to the membrane. It catalyses the reaction [hyaluronan](n) + UDP-N-acetyl-alpha-D-glucosamine = N-acetyl-beta-D-glucosaminyl-(1-&gt;4)-[hyaluronan](n) + UDP + H(+). The catalysed reaction is N-acetyl-beta-D-glucosaminyl-(1-&gt;4)-[hyaluronan](n) + UDP-alpha-D-glucuronate = [hyaluronan](n+1) + UDP + H(+). It functions in the pathway glycan biosynthesis; hyaluronan biosynthesis. Functionally, catalyzes the addition of GlcNAc or GlcUA monosaccharides to the nascent hyaluronan polymer. Therefore, it is essential to hyaluronan synthesis a major component of most extracellular matrices that has a structural role in tissues architectures and regulates cell adhesion, migration and differentiation. Also able to catalyze the synthesis of chito-oligosaccharide depending on the substrate. The protein is Hyaluronan synthase 1 (has1) of Xenopus tropicalis (Western clawed frog).